A 1411-amino-acid chain; its full sequence is Tectonin beta-propeller repeat-containing protein 2 (1411 aa).

WD repeat units follow at residues 23–66, 67–114, 115–161, 162–203, 204–265, 266–309, and 310–343; these read IPTK…HLNQ, MRKY…PGRN, KQLR…LDQG, LCNS…EKSV, RQIG…AGGV, KPFE…EYSI, and YLLD…FFLK. Disordered stretches follow at residues 379–439, 463–542, 579–637, and 758–779; these read QAEK…GSQP, VKRK…QENT, RELL…GPQS, and YAHG…PSCS. The span at 400–420 shows a compositional bias: low complexity; sequence SSVASEPRSRSSSLNSTDSGS. 4 stretches are compositionally biased toward polar residues: residues 475–489, 496–542, 608–621, and 763–779; these read GSRS…STPC, SPQS…QENT, PNST…QDSS, and PSSS…PSCS. TECPR repeat units lie at residues 945–976, 994–1027, 1179–1209, 1226–1259, 1279–1310, and 1322–1353; these read NVVW…KCDI, QTLW…WQVS, DALW…TRLD, QHIW…IMIE, QMLW…EHVP, and RTVW…KKIP. The segment at 1388 to 1411 is disordered; that stretch reads HGTQKSSQAAMPHPEDLEDEWEVI.

It belongs to the WD repeat KIAA0329 family. As to quaternary structure, interacts with the ATG8 family members GABARAP, GABARAPL1, GABARAPL2, MAP1LC3B and MAP1LC3C. Detected in skin fibroblast (at protein level).

In terms of biological role, probably plays a role as positive regulator of autophagy. In Homo sapiens (Human), this protein is Tectonin beta-propeller repeat-containing protein 2 (TECPR2).